Reading from the N-terminus, the 141-residue chain is Large ribosomal subunit protein uL11 (141 aa).

Belongs to the universal ribosomal protein uL11 family. Part of the ribosomal stalk of the 50S ribosomal subunit. Interacts with L10 and the large rRNA to form the base of the stalk. L10 forms an elongated spine to which L12 dimers bind in a sequential fashion forming a multimeric L10(L12)X complex. Post-translationally, one or more lysine residues are methylated.

Forms part of the ribosomal stalk which helps the ribosome interact with GTP-bound translation factors. This chain is Large ribosomal subunit protein uL11, found in Thermotoga petrophila (strain ATCC BAA-488 / DSM 13995 / JCM 10881 / RKU-1).